The primary structure comprises 510 residues: NAD(P)H-quinone oxidoreductase subunit 2 A, chloroplastic (510 aa).

13 consecutive transmembrane segments (helical) span residues 26 to 46 (LFDG…ILLL), 57 to 77 (IPWF…ALLF), 99 to 119 (IFQF…VEYI), 124 to 144 (MAIT…MFLC), 149 to 169 (LITI…LSGY), 183 to 203 (YLLM…WLYG), 227 to 247 (PGIS…LSPA), 295 to 315 (WHPL…LIAI), 323 to 342 (MLAY…IIVG), 354 to 374 (YMLF…LFGL), 395 to 415 (ALSL…AGFF), 418 to 438 (LHLF…IGLF), and 484 to 504 (MIVC…IIAI).

The protein belongs to the complex I subunit 2 family. NDH is composed of at least 16 different subunits, 5 of which are encoded in the nucleus.

It localises to the plastid. Its subcellular location is the chloroplast thylakoid membrane. It catalyses the reaction a plastoquinone + NADH + (n+1) H(+)(in) = a plastoquinol + NAD(+) + n H(+)(out). The catalysed reaction is a plastoquinone + NADPH + (n+1) H(+)(in) = a plastoquinol + NADP(+) + n H(+)(out). In terms of biological role, NDH shuttles electrons from NAD(P)H:plastoquinone, via FMN and iron-sulfur (Fe-S) centers, to quinones in the photosynthetic chain and possibly in a chloroplast respiratory chain. The immediate electron acceptor for the enzyme in this species is believed to be plastoquinone. Couples the redox reaction to proton translocation, and thus conserves the redox energy in a proton gradient. The polypeptide is NAD(P)H-quinone oxidoreductase subunit 2 A, chloroplastic (Oenothera biennis (German evening primrose)).